A 196-amino-acid chain; its full sequence is Cupin-domain-containing oxidoreductase srdB (196 aa).

The Cupin type-2 domain maps to 92–156 (DFAPGCKSNM…TSDEKPARML (65 aa)).

The protein belongs to the virC family.

Cupin-domain-containing oxidoreductase; part of the gene cluster that mediates the biosynthesis of sordarial, a salicylic aldehyde structurally related to the phytotoxin pyriculol. The most interesting aspect of this pathway is formation of an aromatic product from the highly reducing polyketide synthase srdA. SrdA synthesizes a reduced polyketide chain from one molecule of acetyl-CoA and five molecules of malonyl-CoA. The polyketide chain is then reductively released as an aldehyde. The oxidoreductases srdC, srdD and srdE then oxidize one of the hydroxy groups to facilitate the intramolecular aldol condensation, followed by dehydration to yield a salicylic aldehyde. This aldehyde can undergo facile reduction by endogenous reductases to yield the alcohol 1-hydroxy-2-hydroxymethyl-3-pent-1,3-dienylbenzene. The flavin-dependent srdI counteract against the propensity of the aldehydes to be reduced under physiological conditions and is responsible for reoxidizing 1-hydroxy-2-hydroxymethyl-3-pent-1,3-dienylbenzene back to the salicylic aldehyde. This salicylic aldehyde is then selectively epoxidized by the cupin-domain-containing oxidoreductase srdB to yield the epoxide, which can be hydrolyzed stereoselectively by the hydrolase srdG to give the final product sordarial. The sequence is that of Cupin-domain-containing oxidoreductase srdB from Neurospora crassa (strain ATCC 24698 / 74-OR23-1A / CBS 708.71 / DSM 1257 / FGSC 987).